The chain runs to 312 residues: Acetylglutamate kinase (312 aa).

Residues 76 to 77, Arg-98, and Asn-199 each bind substrate; that span reads GG.

The protein belongs to the acetylglutamate kinase family. ArgB subfamily.

The protein resides in the cytoplasm. The catalysed reaction is N-acetyl-L-glutamate + ATP = N-acetyl-L-glutamyl 5-phosphate + ADP. It functions in the pathway amino-acid biosynthesis; L-arginine biosynthesis; N(2)-acetyl-L-ornithine from L-glutamate: step 2/4. Functionally, catalyzes the ATP-dependent phosphorylation of N-acetyl-L-glutamate. The protein is Acetylglutamate kinase of Beutenbergia cavernae (strain ATCC BAA-8 / DSM 12333 / CCUG 43141 / JCM 11478 / NBRC 16432 / NCIMB 13614 / HKI 0122).